Reading from the N-terminus, the 481-residue chain is tRNA:m(4)X modification enzyme TRM13 homolog (481 aa).

A CHHC U11-48K-type zinc finger spans residues 56 to 83; the sequence is RILCPLDPKHTVYEDQLAKHLKKCNSRE. Residues cysteine 59, histidine 65, histidine 75, and cysteine 79 each contribute to the Zn(2+) site. A coiled-coil region spans residues 113 to 140; it reads SLSEEQLENLIKKLRKASEGLNSTHEDH. 2 disordered regions span residues 296-319 and 379-414; these read AKRI…SEKD and LEGS…TDSL. Residues 385–407 are compositionally biased toward basic and acidic residues; the sequence is TPERKDAQRDENEEHDDGGDRLT.

This sequence belongs to the methyltransferase TRM13 family.

It catalyses the reaction cytidine(4) in tRNA(Pro) + S-adenosyl-L-methionine = 2'-O-methylcytidine(4) in tRNA(Pro) + S-adenosyl-L-homocysteine + H(+). It carries out the reaction cytidine(4) in tRNA(Gly)(GCC) + S-adenosyl-L-methionine = 2'-O-methylcytidine(4) in tRNA(Gly)(GCC) + S-adenosyl-L-homocysteine + H(+). The catalysed reaction is adenosine(4) in tRNA(His) + S-adenosyl-L-methionine = 2'-O-methyladenosine(4) in tRNA(His) + S-adenosyl-L-homocysteine + H(+). Functionally, tRNA methylase which 2'-O-methylates cytidine(4) in tRNA(Pro) and tRNA(Gly)(GCC), and adenosine(4) in tRNA(His). The protein is tRNA:m(4)X modification enzyme TRM13 homolog (Trmt13) of Mus musculus (Mouse).